The sequence spans 4592 residues: Intermembrane lipid transfer protein vps13D (4592 aa).

The 100-residue stretch at 3 to 102 (FESVVAEVID…SSTNVSSNYS (100 aa)) folds into the Chorein N-terminal domain. Disordered stretches follow at residues 95 to 142 (TNVS…TASQ), 157 to 199 (LDKK…IDSQ), 286 to 307 (STTSSNNNNNNNNNNTTSSSSS), 445 to 529 (KKDD…IKGI), 574 to 605 (SNSTTTNNSNNNSSSSPNILATSPSNNSLSPM), 826 to 861 (NYNNQSSSSSSSSQPPPPKPTEETSTTNKPKKQQGI), 1040 to 1083 (TTSP…KRQW), 1219 to 1249 (YFKNKRKEENEQNEGNTEDDEQEEEEQEKKP), 1655 to 1717 (QQQE…QQSN), 1855 to 1886 (SNNNNDNNNDNNNSNNSNNNNNTSNGSGNSLF), 1971 to 2001 (TSSLDNTSISTTTTTTTTTTTTTTTTTTTTS), 2025 to 2056 (PLINDNSNKSPTSKSSSSKSSSSKSSKKEQQQ), and 2245 to 2270 (NNNNNNNNNNNNNNNNNNNNNTNIIN). Composition is skewed to low complexity over residues 117–139 (SSSNNNNNNNNDSSSSSSNTTST) and 172–199 (KSTNTTTNNNGINNSNDKNKNNNNIDSQ). Residues 437–517 (KNATIKLNKK…KKKEEKGKSK (81 aa)) are a coiled coil. Positions 445–457 (KKDDKKDDKKDDI) are enriched in basic and acidic residues. Over residues 458–474 (NSSSSSIGSSNSSNNTP) the composition is skewed to low complexity. Positions 475–529 (TKDKNKEKEKDKEKEKEKEKKKEKEKLKLEEKKKKKEEKGKSKSKDSKKNKIKGI) are enriched in basic and acidic residues. Positions 574-591 (SNSTTTNNSNNNSSSSPN) are enriched in low complexity. Polar residues predominate over residues 592–603 (ILATSPSNNSLS). Positions 829 to 838 (NQSSSSSSSS) are enriched in low complexity. Residues 1040–1059 (TTSPTFNSLNNKPSTLQNNH) are compositionally biased toward polar residues. Residues 1064-1076 (NGNSSNNNNTDSP) show a composition bias toward low complexity. Acidic residues predominate over residues 1234 to 1244 (NTEDDEQEEEE). Composition is skewed to low complexity over residues 1669 to 1689 (KSINSKPPSPKLSLMSPLRKS) and 1702 to 1715 (QQQQQQQQQQQQQQ). Over residues 2037-2048 (SKSSSSKSSSSK) the composition is skewed to low complexity. A TPR 1 repeat occupies 2321-2354 (TLQINDLGANIISIGNKSTSIKCFLRSIRLSDSR). Disordered regions lie at residues 2456-2489 (KTNNNNNNNNNNYNNTNSNNNNNQEEEEKDSIST), 2862-2882 (AVSTSNNPNGSGYNNSNNNNG), 3006-3035 (GEQKGKKKSTSTSTSPTLSSQPSSSSSSSS), 3106-3129 (NSSGYNSSSPSPSSSSSPSSSSSN), 3356-3384 (KLPTSPQTSSSSSPPPATTTTSTTTKRTT), 3560-3580 (NSLKIEQGRKSKKQQQQHRHN), and 3630-3679 (STNH…SKLK). Composition is skewed to low complexity over residues 2458–2478 (NNNNNNNNNNYNNTNSNNNNN), 2864–2880 (STSNNPNGSGYNNSNNN), and 3015–3035 (TSTSTSPTLSSQPSSSSSSSS). Residues 3358–3384 (PTSPQTSSSSSPPPATTTTSTTTKRTT) show a composition bias toward low complexity. Residues 3569–3580 (KSKKQQQQHRHN) show a composition bias toward basic residues. The span at 3640–3679 (SSTFNNSSNDNINNGNSNNNTSNSLSPPSSSSSINLSKLK) shows a compositional bias: low complexity. Residues 3789–3822 (EVPKPYLGRVDIKDNDTHTSIHFYDQDTEYSPFR) form a TPR 2 repeat. 2 stretches are compositionally biased toward low complexity: residues 3872-3894 (TTTTTTTTNSTNDINNDNNNNNN) and 4111-4135 (QQLQQNPQQQQPQQQNNEIQNNPIN). Disordered regions lie at residues 3872 to 3897 (TTTTTTTTNSTNDINNDNNNNNNQYI) and 4105 to 4135 (KKHKKNQQLQQNPQQQQPQQQNNEIQNNPIN).

It is found in the membrane. In terms of biological role, mediates the transfer of lipids between membranes at organelle contact sites. This chain is Intermembrane lipid transfer protein vps13D (vps13D), found in Dictyostelium discoideum (Social amoeba).